The sequence spans 111 residues: MIWLVLILASLLSVTGQLCQKQATRPVAINKRRKHIALWLGLGLVCLGLAMVLWLLVLQTVPVGIAYPMLSLNFVWVTLAATKLWHEPVSFRHWCGVAFIIGGIVILGSTV.

Over 1-37 the chain is Cytoplasmic; that stretch reads MIWLVLILASLLSVTGQLCQKQATRPVAINKRRKHIA. The chain crosses the membrane as a helical span at residues 38–58; the sequence is LWLGLGLVCLGLAMVLWLLVL. An EamA domain is found at 40–109; it reads LGLGLVCLGL…IIGGIVILGS (70 aa). The Periplasmic portion of the chain corresponds to 59–60; it reads QT. A helical transmembrane segment spans residues 61-81; it reads VPVGIAYPMLSLNFVWVTLAA. At 82–87 the chain is on the cytoplasmic side; the sequence is TKLWHE. A helical membrane pass occupies residues 88–108; the sequence is PVSFRHWCGVAFIIGGIVILG. Residues 109 to 111 lie on the Periplasmic side of the membrane; it reads STV.

The protein belongs to the ArnE family. As to quaternary structure, heterodimer of ArnE and ArnF.

The protein localises to the cell inner membrane. Its pathway is bacterial outer membrane biogenesis; lipopolysaccharide biosynthesis. Functionally, translocates 4-amino-4-deoxy-L-arabinose-phosphoundecaprenol (alpha-L-Ara4N-phosphoundecaprenol) from the cytoplasmic to the periplasmic side of the inner membrane. The protein is Probable 4-amino-4-deoxy-L-arabinose-phosphoundecaprenol flippase subunit ArnE of Escherichia fergusonii (strain ATCC 35469 / DSM 13698 / CCUG 18766 / IAM 14443 / JCM 21226 / LMG 7866 / NBRC 102419 / NCTC 12128 / CDC 0568-73).